Consider the following 309-residue polypeptide: MVVVIPRLLRGSLGAICTQAALLRSTPSAFRYLTRSSVMKSKRRPDHLERTADVVRQEVVSAAKVCGVASESPSVKRLCLLVADKDFSFKAGQWVDFFIPGVSVVGGFSICSSPRLLEQERMIELAVKHANHPPALWIHNQCTLDSEVAVRVGGEFFFDPKPTDASRNLVLIAGGVGINPLLSILRHAADLLRERASKGQGYEMGTVRLLYSAKDTSELLFKKNILDLVNEFPEKIACSLHVTKQTTQITADLRPYITEGRITQKEIRDHISKETLFYICGPPPMTDFFSKELESSRVPREHICFEKWW.

The signal sequence occupies residues 1 to 14; the sequence is MVVVIPRLLRGSLG. Residues 47–161 enclose the FAD-binding FR-type domain; the sequence is HLERTADVVR…VGGEFFFDPK (115 aa). Position 175-180 (175-180) interacts with NAD(+); that stretch reads GVGINP.

The polypeptide is Oxidoreductase NAD-binding domain-containing protein 1 (OXNAD1) (Bos taurus (Bovine)).